A 195-amino-acid chain; its full sequence is GTP-dependent dephospho-CoA kinase (195 aa).

GTP contacts are provided by Asp-49, Val-50, Asp-68, Glu-127, and Asp-150.

This sequence belongs to the GTP-dependent DPCK family.

It catalyses the reaction 3'-dephospho-CoA + GTP = GDP + CoA + H(+). It functions in the pathway cofactor biosynthesis; coenzyme A biosynthesis. In terms of biological role, catalyzes the GTP-dependent phosphorylation of the 3'-hydroxyl group of dephosphocoenzyme A to form coenzyme A (CoA). In Methanosarcina mazei (strain ATCC BAA-159 / DSM 3647 / Goe1 / Go1 / JCM 11833 / OCM 88) (Methanosarcina frisia), this protein is GTP-dependent dephospho-CoA kinase.